Reading from the N-terminus, the 101-residue chain is NAD(P)H-quinone oxidoreductase subunit 4L (101 aa).

The next 3 helical transmembrane spans lie at 3–23 (LRYF…GLIT), 30–50 (VLMS…AFSN), and 64–84 (VFVI…VLAI).

The protein belongs to the complex I subunit 4L family. NDH-1 can be composed of about 15 different subunits; different subcomplexes with different compositions have been identified which probably have different functions.

The protein localises to the cellular thylakoid membrane. It catalyses the reaction a plastoquinone + NADH + (n+1) H(+)(in) = a plastoquinol + NAD(+) + n H(+)(out). The enzyme catalyses a plastoquinone + NADPH + (n+1) H(+)(in) = a plastoquinol + NADP(+) + n H(+)(out). Functionally, NDH-1 shuttles electrons from an unknown electron donor, via FMN and iron-sulfur (Fe-S) centers, to quinones in the respiratory and/or the photosynthetic chain. The immediate electron acceptor for the enzyme in this species is believed to be plastoquinone. Couples the redox reaction to proton translocation, and thus conserves the redox energy in a proton gradient. Cyanobacterial NDH-1 also plays a role in inorganic carbon-concentration. The chain is NAD(P)H-quinone oxidoreductase subunit 4L from Nostoc sp. (strain PCC 7120 / SAG 25.82 / UTEX 2576).